The sequence spans 549 residues: Arginine--tRNA ligase (549 aa).

A 'HIGH' region motif is present at residues 122–132 (ANPTGFLHLGH).

The protein belongs to the class-I aminoacyl-tRNA synthetase family. Monomer.

The protein localises to the cytoplasm. The catalysed reaction is tRNA(Arg) + L-arginine + ATP = L-arginyl-tRNA(Arg) + AMP + diphosphate. This Mycoplasmoides gallisepticum (strain R(low / passage 15 / clone 2)) (Mycoplasma gallisepticum) protein is Arginine--tRNA ligase.